We begin with the raw amino-acid sequence, 594 residues long: UvrABC system protein C (594 aa).

Residues 15 to 92 (DKPGCYQMKN…IQKFQPYYNI (78 aa)) form the GIY-YIG domain. Residues 197–232 (AKIKQSLQTKMQKASEAMEFERAADIRDQIHYIEVT) form the UVR domain.

This sequence belongs to the UvrC family. As to quaternary structure, interacts with UvrB in an incision complex.

Its subcellular location is the cytoplasm. The UvrABC repair system catalyzes the recognition and processing of DNA lesions. UvrC both incises the 5' and 3' sides of the lesion. The N-terminal half is responsible for the 3' incision and the C-terminal half is responsible for the 5' incision. This Pediococcus pentosaceus (strain ATCC 25745 / CCUG 21536 / LMG 10740 / 183-1w) protein is UvrABC system protein C.